A 484-amino-acid chain; its full sequence is 1,3-beta-glucanosyltransferase GAS5 (484 aa).

The signal sequence occupies residues 1–19 (MLLRSLTSAFVLSAGLAQA). Asn-24 and Asn-60 each carry an N-linked (GlcNAc...) asparagine glycan. Cys-71 and Cys-100 are oxidised to a cystine. Residues Tyr-89, Asn-159, and Glu-160 each coordinate (1,3-beta-D-glucosyl)n. Glu-160 acts as the Proton donor in catalysis. N-linked (GlcNAc...) asparagine glycosylation is present at Asn-166. (1,3-beta-D-glucosyl)n-binding residues include Asp-201 and Arg-206. Cystine bridges form between Cys-215-Cys-348 and Cys-234-Cys-265. Catalysis depends on Glu-262, which acts as the Nucleophile. Tyr-295 contributes to the (1,3-beta-D-glucosyl)n binding site. Asn-299, Asn-344, and Asn-359 each carry an N-linked (GlcNAc...) asparagine glycan. Residues 383-462 (TGIATQQSCD…SSQSSSKSKG (80 aa)) form a disordered region. The segment covering 394–404 (KDDDDEEDDDT) has biased composition (acidic residues). Positions 405–462 (SSSSSSSSSSSSSASSSSESSSSTSKASSSSPSASETSLLKSAASATSSSQSSSKSKG) are enriched in low complexity. Gly-462 carries GPI-anchor amidated glycine lipidation. The propeptide at 463 to 484 (AAGIIEIPLIFRALAELYNLVL) is removed in mature form.

Belongs to the glycosyl hydrolase 72 family. In terms of processing, the GPI-anchor is attached to the protein in the endoplasmic reticulum and serves to target the protein to the cell surface. There, the glucosamine-inositol phospholipid moiety is cleaved off and the GPI-modified mannoprotein is covalently attached via its lipidless GPI glycan remnant to the 1,6-beta-glucan of the outer cell wall layer.

The protein resides in the secreted. It localises to the cell wall. Its subcellular location is the membrane. Its function is as follows. Splits internally a 1,3-beta-glucan molecule and transfers the newly generated reducing end (the donor) to the non-reducing end of another 1,3-beta-glucan molecule (the acceptor) forming a 1,3-beta linkage, resulting in the elongation of 1,3-beta-glucan chains in the cell wall. Involved in cell wall biosynthesis and morphogenesis. The protein is 1,3-beta-glucanosyltransferase GAS5 (GAS5) of Saccharomyces cerevisiae (strain ATCC 204508 / S288c) (Baker's yeast).